A 271-amino-acid polypeptide reads, in one-letter code: Protein PXR1 (271 aa).

Positions 25 to 72 constitute a G-patch domain; that stretch reads TSRFGHQFLEKFGWKPGMGLGLSPMNSNTSHIKVSIKDDNVGLGAKLK. The disordered stretch occupies residues 147-239; that stretch reads SNAKKRKREG…SASNIPDAVN (93 aa). Over residues 157-168 the composition is skewed to acidic residues; it reads DDSEDEDDDDKE. A compositionally biased stretch (basic residues) spans 175 to 203; that stretch reads KKHKKHKKHKKDKKKDKKDKKEHKKHKKE. A compositionally biased stretch (basic and acidic residues) spans 204-221; that stretch reads EKRLKKEKRAEKTKETKK. Position 230 is a phosphoserine (S230).

The protein belongs to the PINX1 family. As to quaternary structure, interacts with EST2.

It is found in the nucleus. It localises to the nucleolus. Functionally, involved in rRNA-processing at A0, A1 and A2 sites through its action in U18 and U24 snoRNA 3'-end final trimming. Negative regulator of telomerase through competition for binding to EST2 with TLC1. The sequence is that of Protein PXR1 (PXR1) from Saccharomyces cerevisiae (strain ATCC 204508 / S288c) (Baker's yeast).